A 259-amino-acid polypeptide reads, in one-letter code: Methyltransferase sdnD (259 aa).

It belongs to the FkbM methyltransferase family.

The protein operates within antibiotic biosynthesis. Functionally, methyltransferase; part of the gene cluster that mediates the biosynthesis of sordarin and hypoxysordarin, glycoside antibiotics with a unique tetracyclic diterpene aglycone structure. First, the geranylgeranyl diphosphate synthase sdnC constructs GGDP from farnesyl diphosphate and isopentenyl diphosphate. The diterpene cyclase sdnA then catalyzes the cyclization of GGDP to afford cycloaraneosene. Cycloaraneosene is then hydroxylated four times by the putative cytochrome P450 monooxygenases sdnB, sdnE, sdnF and sdnH to give a hydroxylated cycloaraneosene derivative such as cycloaraneosene-8,9,13,19-tetraol. Although the order of the hydroxylations is unclear, at least C8, C9 and C13 of the cycloaraneosene skeleton are hydroxylated before the sordaricin formation. Dehydration of the 13-hydroxy group of the hydroxylated cycloaraneosene derivative might be catalyzed by an unassigned hypothetical protein such as sdnG and sdnP to construct the cyclopentadiene moiety. The FAD-dependent oxidoreductase sdnN is proposed to catalyze the oxidation at C9 of the hydroxylated cycloaraneosene derivative and also catalyze the Baeyer-Villiger oxidation to give the lactone intermediate. The presumed lactone intermediate would be hydrolyzed to give an acrolein moiety and a carboxylate moiety. Then, [4+2]cycloaddition would occur between the acrolein moiety and the cyclopentadiene moiety to give sordaricin. SdnN might also be involved in the [4+2]cycloaddition after the hypothesized oxidation to accommodate the oxidized product and prompt the [4+2]cycloaddition. GDP-6-deoxy-D-altrose may be biosynthesized from GDP-D-mannose by the putative GDP-mannose-4,6-dehydratase sdnI and the short-chain dehydrogenase sdnK. The glycosyltransferase sdnJ catalyzes the attachment of 6-deoxy-D-altrose onto the 19-hydroxy group of sordaricin to give 4'-O-demethylsordarin. The methyltransferase sdnD would complete the biosynthesis of sordarin. Sordarin can be further modified into hypoxysordarin. The unique acyl chain at the 3'-hydroxy group of hypoxysordarin would be constructed by an iterative type I PKS sdnO and the trans-acting polyketide methyltransferase sdnL. SdnL would be responsible for the introduction of an alpha-methyl group of the polyketide chain. Alternatively, the beta-lactamase-like protein sdnR might be responsible for the cleavage and transfer of the polyketide chain from the PKS sdnO to sordarin. Two putative cytochrome P450 monooxygenases, sdnQ and sdnT, might catalyze the epoxidations of the polyketide chain to complete the biosynthesis of hypoxysordarin. Transcriptional regulators sdnM and sdnS are presumably encoded for the transcriptional regulation of the expression of the sdn gene cluster. The chain is Methyltransferase sdnD from Sordaria araneosa (Pleurage araneosa).